The chain runs to 143 residues: Protein STIG1 (143 aa).

The first 23 residues, 1-23, serve as a signal peptide directing secretion; that stretch reads MDFIILLIAILALSSTPITIISG. The interval 76–87 is sufficient for PI(4)P binding; it reads RTCCFNYFCVDL. The sufficient for binding to the extracellular domain of PRK2 stretch occupies residues 80 to 83; sequence FNYF. Residues 88-115 are sufficient for PI(3)P binding; it reads FTNRFNCGSCGLVCIVGTRCCGGICVDI.

It belongs to the STIG1 family. As to quaternary structure, interacts with PRK1 and PRK2 (via extracellular domain). Expressed in the stigma and the upper section of the style.

It is found in the secreted. The protein resides in the extracellular space. It localises to the apoplast. Promotes pollen tube growth. A C-terminal peptide is cleaved from the propeptide in the stigmatic exudate and represent the major form of STIG1. Binds phosphoinositol lipids. The binding of external phosphatidylinositol 3-phosphate (PI(3)P) and PRK2 by STIG1 induces a rapid intracellular reactive oxygen species elevation. This Solanum lycopersicum (Tomato) protein is Protein STIG1.